Consider the following 282-residue polypeptide: Phosphatidylglycerol--prolipoprotein diacylglyceryl transferase (282 aa).

3 helical membrane-spanning segments follow: residues 19-39 (IGPFAIRWYALAYICGIVFGW), 58-78 (ISLVQVDDFILWVTLGIILGG), and 104-124 (GGMSFHGGFLGCVVAVMWFAY). Arg-149 serves as a coordination point for a 1,2-diacyl-sn-glycero-3-phospho-(1'-sn-glycerol). Transmembrane regions (helical) follow at residues 190-210 (AGMEGILLFTVLAIMIRLGAL), 214-234 (GMILGAFILIYGLTRIAGEHF), and 250-270 (MGMLLSIPMLIVGLILIVLAI).

Belongs to the Lgt family.

It is found in the cell inner membrane. It catalyses the reaction L-cysteinyl-[prolipoprotein] + a 1,2-diacyl-sn-glycero-3-phospho-(1'-sn-glycerol) = an S-1,2-diacyl-sn-glyceryl-L-cysteinyl-[prolipoprotein] + sn-glycerol 1-phosphate + H(+). It functions in the pathway protein modification; lipoprotein biosynthesis (diacylglyceryl transfer). In terms of biological role, catalyzes the transfer of the diacylglyceryl group from phosphatidylglycerol to the sulfhydryl group of the N-terminal cysteine of a prolipoprotein, the first step in the formation of mature lipoproteins. The polypeptide is Phosphatidylglycerol--prolipoprotein diacylglyceryl transferase (Bradyrhizobium diazoefficiens (strain JCM 10833 / BCRC 13528 / IAM 13628 / NBRC 14792 / USDA 110)).